A 229-amino-acid chain; its full sequence is Germin-like protein 12-1 (229 aa).

A signal peptide spans 1–22 (MASSNFFLPTALIALVATQAMA). Cysteines 32 and 47 form a disulfide. One can recognise a Cupin type-1 domain in the interval 62–217 (ANLDKPMDTT…AFQVDKKAVD (156 aa)). N-linked (GlcNAc...) asparagine glycosylation is present at N78. 4 residues coordinate Mn(2+): H111, H113, E118, and H162.

This sequence belongs to the germin family. In terms of assembly, oligomer (believed to be a pentamer but probably hexamer).

The protein resides in the secreted. It localises to the extracellular space. Its subcellular location is the apoplast. Its function is as follows. May play a role in plant defense. Probably has no oxalate oxidase activity even if the active site is conserved. The protein is Germin-like protein 12-1 of Oryza sativa subsp. japonica (Rice).